Reading from the N-terminus, the 211-residue chain is Type II secretion system protein J (211 aa).

Positions 1 to 7 are cleaved as a propeptide — leader sequence; it reads MRPRAAG. Phe-8 is modified (N-methylphenylalanine). A helical transmembrane segment spans residues 8–28; that stretch reads FTLIEVLLATMLLVGGLALAF.

The protein belongs to the GSP J family.

Its subcellular location is the membrane. Functionally, involved in a type II secretion system (T2SS, formerly general secretion pathway, GSP) for the export of proteins. The sequence is that of Type II secretion system protein J (xpsJ) from Xanthomonas campestris pv. campestris (strain ATCC 33913 / DSM 3586 / NCPPB 528 / LMG 568 / P 25).